The primary structure comprises 104 residues: Endogenous retrovirus group K member 21 Rec protein (104 aa).

The tract at residues 1 to 48 (MHPSEMQRKAPPRRRRHRNRAPLTHKMNKMVTSEQMKLPSTKKAEPPT) is disordered. Residues 10–20 (APPRRRRHRNR) show a composition bias toward basic residues. Positions 13 to 20 (RRRRHRNR) match the Nuclear localization signal motif. Residues 49–58 (WAQLKKLTQL) carry the Nuclear export signal motif.

In terms of assembly, forms homodimers, homotrimers, and homotetramers via a C-terminal domain. Associates with XPO1 and with ZNF145.

Its subcellular location is the cytoplasm. The protein localises to the nucleus. The protein resides in the nucleolus. Retroviral replication requires the nuclear export and translation of unspliced, singly-spliced and multiply-spliced derivatives of the initial genomic transcript. Rec interacts with a highly structured RNA element (RcRE) present in the viral 3'LTR and recruits the cellular nuclear export machinery. This permits export to the cytoplasm of unspliced genomic or incompletely spliced subgenomic viral transcripts. In Homo sapiens (Human), this protein is Endogenous retrovirus group K member 21 Rec protein (ERVK-21).